Reading from the N-terminus, the 277-residue chain is Knob-associated histidine-rich protein (277 aa).

Disordered stretches follow at residues 95–114 (DGSHGNLRGHDNKGSEGYGY) and 162–277 (SSVN…KKKK). 2 stretches are compositionally biased toward basic and acidic residues: residues 169–190 (KHGDEKHHSSKKHEGNDGEGEK) and 211–220 (KDNEDAESVK). Residues 221 to 237 (SKKHKSHDCEKKKSKKH) are compositionally biased toward basic residues. 2 stretches are compositionally biased toward basic and acidic residues: residues 238 to 259 (KDNEDAESVKSKKSVKEKGEKH) and 268 to 277 (KTNEEKKKKK).

Its subcellular location is the secreted. Its function is as follows. KAHRP might mimick human histidine-rich glycoproteins to anchor host thrombospondin or a parasite analog in a binding complex with the endothelial cell receptor. This chain is Knob-associated histidine-rich protein, found in Plasmodium falciparum (isolate CDC / Honduras).